The following is a 171-amino-acid chain: uncharacterized protein (171 aa).

Disordered regions lie at residues 1 to 41 (MDAV…SKPK) and 114 to 147 (DSLGNTASSSSMDPAKGVPSQSGPPEGLGLRPKR). Positions 27 to 38 (AQQQQGPSAQGS) are enriched in low complexity. The span at 116–125 (LGNTASSSSM) shows a compositional bias: polar residues.

This is an uncharacterized protein from Mus musculus (Mouse).